The chain runs to 353 residues: Bone morphogenetic protein 2 (353 aa).

Positions 1–239 (GSLKRPEDLL…GHPLHKREKR (239 aa)) are excised as a propeptide. Residues asparagine 91, asparagine 121, and asparagine 157 are each glycosylated (N-linked (GlcNAc...) asparagine). Residues 228 to 248 (GKGHPLHKREKRQAKHKQRKR) are disordered. Over residues 231-248 (HPLHKREKRQAKHKQRKR) the composition is skewed to basic residues. Intrachain disulfides connect cysteine 253–cysteine 318, cysteine 282–cysteine 350, and cysteine 286–cysteine 352. A glycan (N-linked (GlcNAc...) asparagine) is linked at asparagine 295.

It belongs to the TGF-beta family. In terms of assembly, homodimer; disulfide-linked.

It localises to the secreted. Its function is as follows. Negatively regulates the structure and function of the limb apical ectodermal ridge. The protein is Bone morphogenetic protein 2 (BMP2) of Gallus gallus (Chicken).